A 269-amino-acid chain; its full sequence is [LysW]-aminoadipate kinase (269 aa).

5 to 8 serves as a coordination point for ATP; sequence KVGG. Residue Arg-64 coordinates substrate. Position 78 (Tyr-78) interacts with ATP. Substrate is bound at residue Asn-168.

The protein belongs to the acetylglutamate kinase family. LysZ subfamily.

The protein localises to the cytoplasm. It carries out the reaction [amino-group carrier protein]-C-terminal-N-(1,4-dicarboxybutan-1-yl)-L-glutamine + ATP = [amino-group carrier protein]-C-terminal-N-(1-carboxy-5-phosphooxy-5-oxopentan-1-yl)-L-glutamine + ADP. Its pathway is amino-acid biosynthesis; L-lysine biosynthesis via AAA pathway; L-lysine from L-alpha-aminoadipate (Thermus route): step 2/5. In terms of biological role, catalyzes the phosphorylation of LysW-gamma-alpha-aminoadipate. Does not phosphorylate N-acetyl-glutamate. The sequence is that of [LysW]-aminoadipate kinase from Thermus thermophilus (strain ATCC BAA-163 / DSM 7039 / HB27).